The primary structure comprises 104 residues: UPF0145 protein NP_2600A (104 aa).

It belongs to the UPF0145 family.

This is UPF0145 protein NP_2600A from Natronomonas pharaonis (strain ATCC 35678 / DSM 2160 / CIP 103997 / JCM 8858 / NBRC 14720 / NCIMB 2260 / Gabara) (Halobacterium pharaonis).